A 347-amino-acid polypeptide reads, in one-letter code: Dihydroorotase (347 aa).

Zn(2+) is bound by residues His-14 and His-16. Substrate-binding positions include 16 to 18 (HLR) and Asn-42. Residues Lys-100, His-137, and His-175 each coordinate Zn(2+). N6-carboxylysine is present on Lys-100. His-137 is a binding site for substrate. Leu-220 serves as a coordination point for substrate. Asp-248 contributes to the Zn(2+) binding site. The active site involves Asp-248. Residues His-252 and Ala-264 each contribute to the substrate site.

Belongs to the metallo-dependent hydrolases superfamily. DHOase family. Class II DHOase subfamily. As to quaternary structure, homodimer. Requires Zn(2+) as cofactor.

The catalysed reaction is (S)-dihydroorotate + H2O = N-carbamoyl-L-aspartate + H(+). It functions in the pathway pyrimidine metabolism; UMP biosynthesis via de novo pathway; (S)-dihydroorotate from bicarbonate: step 3/3. Catalyzes the reversible cyclization of carbamoyl aspartate to dihydroorotate. The polypeptide is Dihydroorotase (Pseudomonas savastanoi pv. phaseolicola (strain 1448A / Race 6) (Pseudomonas syringae pv. phaseolicola (strain 1448A / Race 6))).